The following is a 193-amino-acid chain: Potassium-transporting ATPase KdpC subunit (193 aa).

A helical transmembrane segment spans residues 14–34 (ITFTFLVLCGLVYPLIVTGIA).

It belongs to the KdpC family. The system is composed of three essential subunits: KdpA, KdpB and KdpC.

It localises to the cell membrane. Functionally, part of the high-affinity ATP-driven potassium transport (or Kdp) system, which catalyzes the hydrolysis of ATP coupled with the electrogenic transport of potassium into the cytoplasm. This subunit acts as a catalytic chaperone that increases the ATP-binding affinity of the ATP-hydrolyzing subunit KdpB by the formation of a transient KdpB/KdpC/ATP ternary complex. This chain is Potassium-transporting ATPase KdpC subunit, found in Bacillus cereus (strain Q1).